The primary structure comprises 244 residues: ATP synthase subunit a, chloroplastic (244 aa).

A run of 5 helical transmembrane segments spans residues 35-55 (QVLI…VIAV), 92-112 (VPFI…GALL), 131-151 (INTT…AGLS), 196-216 (LVVV…VMFL), and 217-237 (GLFI…AYIG).

Belongs to the ATPase A chain family. F-type ATPases have 2 components, CF(1) - the catalytic core - and CF(0) - the membrane proton channel. CF(1) has five subunits: alpha(3), beta(3), gamma(1), delta(1), epsilon(1). CF(0) has four main subunits: a, b, b' and c.

Its subcellular location is the plastid. The protein localises to the chloroplast thylakoid membrane. In terms of biological role, key component of the proton channel; it plays a direct role in the translocation of protons across the membrane. The polypeptide is ATP synthase subunit a, chloroplastic (Gossypium barbadense (Sea Island cotton)).